A 431-amino-acid polypeptide reads, in one-letter code: Enolase (431 aa).

Position 167 (Q167) interacts with (2R)-2-phosphoglycerate. E209 serves as the catalytic Proton donor. Mg(2+) contacts are provided by D246, E290, and D317. The (2R)-2-phosphoglycerate site is built by K342, R371, S372, and K393. Residue K342 is the Proton acceptor of the active site.

This sequence belongs to the enolase family. In terms of assembly, component of the RNA degradosome, a multiprotein complex involved in RNA processing and mRNA degradation. The cofactor is Mg(2+).

The protein resides in the cytoplasm. The protein localises to the secreted. It localises to the cell surface. The enzyme catalyses (2R)-2-phosphoglycerate = phosphoenolpyruvate + H2O. It functions in the pathway carbohydrate degradation; glycolysis; pyruvate from D-glyceraldehyde 3-phosphate: step 4/5. In terms of biological role, catalyzes the reversible conversion of 2-phosphoglycerate (2-PG) into phosphoenolpyruvate (PEP). It is essential for the degradation of carbohydrates via glycolysis. This Pectobacterium atrosepticum (strain SCRI 1043 / ATCC BAA-672) (Erwinia carotovora subsp. atroseptica) protein is Enolase.